A 225-amino-acid polypeptide reads, in one-letter code: Lectin (225 aa).

As to quaternary structure, homotetramer.

Chitin-binding lectin. Agglutinates rabbit erythrocytes, but not human erythrocytes. This Vachellia farnesiana (Sweet acacia) protein is Lectin.